We begin with the raw amino-acid sequence, 352 residues long: Transcription factor MYB86 (352 aa).

HTH myb-type domains are found at residues lysine 9–leucine 61 and arginine 62–leucine 116. 2 DNA-binding regions (H-T-H motif) span residues tryptophan 37–leucine 61 and tryptophan 89–leucine 112.

As to expression, expressed in stems, flowers and seeds. Weakly expressed in leaves and roots.

The protein resides in the nucleus. Its function is as follows. Probable transcription factor. In Arabidopsis thaliana (Mouse-ear cress), this protein is Transcription factor MYB86 (MYB86).